The primary structure comprises 205 residues: Protein N-terminal glutamine amidohydrolase (205 aa).

Catalysis depends on residues cysteine 20, histidine 74, and aspartate 90.

It belongs to the NTAQ1 family. As to quaternary structure, monomer.

The catalysed reaction is N-terminal L-glutaminyl-[protein] + H2O = N-terminal L-glutamyl-[protein] + NH4(+). Mediates the side-chain deamidation of N-terminal glutamine residues to glutamate, an important step in N-end rule pathway of protein degradation. Conversion of the resulting N-terminal glutamine to glutamate renders the protein susceptible to arginylation, polyubiquitination and degradation as specified by the N-end rule. Does not act on substrates with internal or C-terminal glutamine and does not act on non-glutamine residues in any position. This chain is Protein N-terminal glutamine amidohydrolase (tun), found in Drosophila pseudoobscura pseudoobscura (Fruit fly).